The chain runs to 111 residues: Rho GDP-dissociation inhibitor 1 (111 aa).

Residues Lys57 and Lys60 each participate in a glycyl lysine isopeptide (Lys-Gly) (interchain with G-Cter in SUMO1); alternate cross-link. Residues Lys57 and Lys60 each participate in a glycyl lysine isopeptide (Lys-Gly) (interchain with G-Cter in SUMO2); alternate cross-link. N6-acetyllysine; alternate is present on Lys60. Lys60 bears the N6-succinyllysine; alternate mark.

This sequence belongs to the Rho GDI family. Monomer. Interacts with FER. Interacts with PLXNB3. Forms a heterodimer with RAC1. Interacts with RHOA, the affinity is increased by three orders of magnitude when RHOA is prenylated. Interacts with PSMD10; the interaction increases ARHGDIA association with RHOA, leading to ARHGDIA-mediated inactivation of RHOA and ROCK and prolonged AKT activation. Interacts with KANK2; the interaction is direct and may regulate the interaction of ARHGDIA with RHOA, RAC1 and CDC42. Interacts with RHOC. Interacts with CDC42. Interacts with NGFR (via death domain); NGFR binding decreases the affinity for RHOA. The N-terminus is blocked.

The protein localises to the cytoplasm. Controls Rho proteins homeostasis. Regulates the GDP/GTP exchange reaction of the Rho proteins by inhibiting the dissociation of GDP from them, and the subsequent binding of GTP to them. Retains Rho proteins such as CDC42, RAC1 and RHOA in an inactive cytosolic pool, regulating their stability and protecting them from degradation. Actively involved in the recycling and distribution of activated Rho GTPases in the cell, mediates extraction from membranes of both inactive and activated molecules due its exceptionally high affinity for prenylated forms. Through the modulation of Rho proteins, may play a role in cell motility regulation. In glioma cells, inhibits cell migration and invasion by mediating the signals of SEMA5A and PLXNB3 that lead to inactivation of RAC1. The protein is Rho GDP-dissociation inhibitor 1 (ARHGDIA) of Cavia porcellus (Guinea pig).